Here is a 45-residue protein sequence, read N- to C-terminus: Sperm-specific protein Phi-3 (45 aa).

Residues 1-45 form a disordered region; sequence AKAKRSPRKKKAAVKKSSKSKAKKPKSPKKKKAAKKPAKKAAKKK.

The protein resides in the nucleus. It localises to the chromosome. Involved in nuclear basic protein transition: histones are replaced by spermatid specific proteins which are themselves replaced by protamines in late spermatids. This Mytilus californianus (California mussel) protein is Sperm-specific protein Phi-3.